The following is a 251-amino-acid chain: Triosephosphate isomerase (251 aa).

Substrate is bound at residue 9–11 (NWK). Histidine 96 serves as the catalytic Electrophile. The active-site Proton acceptor is glutamate 168. Substrate-binding positions include glycine 174, serine 214, and 235 to 236 (GG).

This sequence belongs to the triosephosphate isomerase family. As to quaternary structure, homodimer.

The protein localises to the cytoplasm. It catalyses the reaction D-glyceraldehyde 3-phosphate = dihydroxyacetone phosphate. It participates in carbohydrate biosynthesis; gluconeogenesis. The protein operates within carbohydrate degradation; glycolysis; D-glyceraldehyde 3-phosphate from glycerone phosphate: step 1/1. Functionally, involved in the gluconeogenesis. Catalyzes stereospecifically the conversion of dihydroxyacetone phosphate (DHAP) to D-glyceraldehyde-3-phosphate (G3P). The chain is Triosephosphate isomerase from Cytophaga hutchinsonii (strain ATCC 33406 / DSM 1761 / CIP 103989 / NBRC 15051 / NCIMB 9469 / D465).